A 251-amino-acid polypeptide reads, in one-letter code: PF03932 family protein CutC (251 aa).

The protein belongs to the CutC family.

The protein localises to the cytoplasm. The chain is PF03932 family protein CutC from Agrobacterium fabrum (strain C58 / ATCC 33970) (Agrobacterium tumefaciens (strain C58)).